A 215-amino-acid polypeptide reads, in one-letter code: Outer membrane protein assembly factor BamC homolog (215 aa).

An N-terminal signal peptide occupies residues 1–16 (MKKIILNLVTAIILAG). Residue Cys17 is the site of N-palmitoyl cysteine attachment. Residue Cys17 is the site of S-diacylglycerol cysteine attachment.

This sequence belongs to the BamC family.

The protein localises to the cell outer membrane. The sequence is that of Outer membrane protein assembly factor BamC homolog from Haemophilus influenzae (strain ATCC 51907 / DSM 11121 / KW20 / Rd).